The chain runs to 79 residues: Darcynin (79 aa).

This sequence belongs to the darcynin family.

The sequence is that of Darcynin from Chromobacterium violaceum (strain ATCC 12472 / DSM 30191 / JCM 1249 / CCUG 213 / NBRC 12614 / NCIMB 9131 / NCTC 9757 / MK).